A 411-amino-acid polypeptide reads, in one-letter code: SH3 and cysteine-rich domain-containing protein 2 (411 aa).

Residues 1–29 (MTEMSEKENEPDDAATHSPPGTVSALQET) form a disordered region. The segment covering 19-29 (PPGTVSALQET) has biased composition (polar residues). Phosphoserine is present on Ser48. The interval 64 to 95 (TEVLLTPPTPLPPPSPPPTASDRGLATPSPSP) is disordered. Pro residues predominate over residues 70 to 82 (PPTPLPPPSPPPT). The Phorbol-ester/DAG-type zinc finger occupies 110–161 (LHSFQEHVFKRASPCELCHQLIVGNSKQGLRCKMCKVSVHLWCSEEISHQQC). Disordered regions lie at residues 174 to 203 (SSPLLVHEPPPVCATSKESPPTGDSGKVDP) and 219 to 288 (RSSF…ATLR). A compositionally biased stretch (low complexity) spans 219-232 (RSSFSSTSESPTRS). 2 consecutive SH3 domains span residues 292–351 (GPMY…RVRP) and 354–411 (NVWR…LTEI).

As to quaternary structure, interacts (via SH3 domains) with CACNA1S. Interacts (via SH3 domains) with CACNA1C. Has much lower affinity for CACNA1C than for CACNA1S.

The protein resides in the cytoplasm. The protein localises to the cytosol. It is found in the cell membrane. Its subcellular location is the sarcolemma. Plays a redundant role in promoting the expression of calcium channel CACNA1S at the cell membrane, and thereby contributes to increased channel activity. Slows down the inactivation rate of the calcium channel CACNA1C. In Homo sapiens (Human), this protein is SH3 and cysteine-rich domain-containing protein 2 (STAC2).